The sequence spans 603 residues: Adenine deaminase (603 aa).

It belongs to the metallo-dependent hydrolases superfamily. Adenine deaminase family. Homodimer. Requires Mn(2+) as cofactor.

It catalyses the reaction adenine + H2O + H(+) = hypoxanthine + NH4(+). The chain is Adenine deaminase from Klebsiella pneumoniae (strain 342).